The sequence spans 496 residues: Genome polyprotein (496 aa).

The Extracellular portion of the chain corresponds to 1–447 (SRCTHLENRD…HTVLGGAFNS (447 aa)). 6 disulfides stabilise this stretch: cysteine 3-cysteine 30, cysteine 60-cysteine 116, cysteine 60-cysteine 121, cysteine 74-cysteine 105, cysteine 92-cysteine 116, and cysteine 92-cysteine 121. Positions 98–111 (DRGWGNHCGLFGKG) are fusion peptide. The N-linked (GlcNAc...) asparagine; by host glycan is linked to asparagine 154. Cystine bridges form between cysteine 186-cysteine 290 and cysteine 307-cysteine 338. A helical membrane pass occupies residues 448-468 (IFGGVGFLPKLLMGVALAWLG). Topologically, residues 469 to 479 (LNTRNPTMSMS) are cytoplasmic. A helical membrane pass occupies residues 480 to 496 (FLLTGGLVLAMTLGVGA).

Homodimer; in the endoplasmic reticulum and Golgi. Post-translationally, N-glycosylated.

It is found in the virion membrane. Its subcellular location is the host endoplasmic reticulum membrane. Its function is as follows. Binds to host cell surface receptor and mediates fusion between viral and cellular membranes. Envelope protein is synthesized in the endoplasmic reticulum in the form of heterodimer with protein prM. They play a role in virion budding in the ER, and the newly formed immature particle is covered with 60 spikes composed of heterodimer between precursor prM and envelope protein E. The virion is transported to the Golgi apparatus where the low pH causes dissociation of PrM-E heterodimers and formation of E homodimers. prM-E cleavage is ineficient, and many virions are only partially matured. These uncleaved prM would play a role in immune evasion. This Bos taurus (Bovine) protein is Genome polyprotein.